Here is a 225-residue protein sequence, read N- to C-terminus: UPF0758 protein Vapar_4033 (225 aa).

Residues 103–225 (VFDSPGTVKQ…SYSMAEKGLL (123 aa)) form the MPN domain. Residues His174, His176, and Asp187 each contribute to the Zn(2+) site. Positions 174–187 (HNHPSGSIEPSRAD) match the JAMM motif motif.

Belongs to the UPF0758 family.

This chain is UPF0758 protein Vapar_4033, found in Variovorax paradoxus (strain S110).